Reading from the N-terminus, the 503-residue chain is Glycerol kinase (503 aa).

T14 is a binding site for ADP. Residues T14, T15, and S16 each coordinate ATP. T14 is a binding site for sn-glycerol 3-phosphate. R18 contributes to the ADP binding site. Residues R84, E85, Y136, and D246 each contribute to the sn-glycerol 3-phosphate site. Residues R84, E85, Y136, D246, and Q247 each contribute to the glycerol site. Residues T268 and G311 each coordinate ADP. ATP-binding residues include T268, G311, Q315, and G412. The ADP site is built by G412 and N416.

This sequence belongs to the FGGY kinase family.

It catalyses the reaction glycerol + ATP = sn-glycerol 3-phosphate + ADP + H(+). The protein operates within polyol metabolism; glycerol degradation via glycerol kinase pathway; sn-glycerol 3-phosphate from glycerol: step 1/1. Its activity is regulated as follows. Inhibited by fructose 1,6-bisphosphate (FBP). Functionally, key enzyme in the regulation of glycerol uptake and metabolism. Catalyzes the phosphorylation of glycerol to yield sn-glycerol 3-phosphate. This is Glycerol kinase from Haemophilus influenzae (strain 86-028NP).